Consider the following 201-residue polypeptide: TATA-box-binding protein 2 (201 aa).

A run of 2 repeats spans residues Leu-26–Ile-102 and Ile-116–Leu-193.

It belongs to the TBP family. In terms of assembly, belongs to the TFIID complex together with the TBP-associated factors (TAFs). Binds DNA as monomer.

The protein resides in the nucleus. Functionally, general transcription factor that functions at the core of the DNA-binding multiprotein factor TFIID. Binding of TFIID to the TATA box is the initial transcriptional step of the pre-initiation complex (PIC), playing a role in the activation of eukaryotic genes transcribed by RNA polymerase II. This chain is TATA-box-binding protein 2 (TBP2), found in Triticum aestivum (Wheat).